A 422-amino-acid polypeptide reads, in one-letter code: UPF0229 protein SO_2883 (422 aa).

A disordered region spans residues 60–111 (SEPMFHQGKGGVRDRVHPGNDQFTRGDKIDRPQGGSGGGAGKGDASDSGEGN). The segment covering 70 to 90 (GVRDRVHPGNDQFTRGDKIDR) has biased composition (basic and acidic residues).

It belongs to the UPF0229 family.

The polypeptide is UPF0229 protein SO_2883 (Shewanella oneidensis (strain ATCC 700550 / JCM 31522 / CIP 106686 / LMG 19005 / NCIMB 14063 / MR-1)).